Reading from the N-terminus, the 190-residue chain is Crossover junction endodeoxyribonuclease RuvC (190 aa).

Catalysis depends on residues aspartate 8, glutamate 67, and aspartate 139. 3 residues coordinate Mg(2+): aspartate 8, glutamate 67, and aspartate 139.

It belongs to the RuvC family. Homodimer which binds Holliday junction (HJ) DNA. The HJ becomes 2-fold symmetrical on binding to RuvC with unstacked arms; it has a different conformation from HJ DNA in complex with RuvA. In the full resolvosome a probable DNA-RuvA(4)-RuvB(12)-RuvC(2) complex forms which resolves the HJ. Mg(2+) is required as a cofactor.

It localises to the cytoplasm. The catalysed reaction is Endonucleolytic cleavage at a junction such as a reciprocal single-stranded crossover between two homologous DNA duplexes (Holliday junction).. In terms of biological role, the RuvA-RuvB-RuvC complex processes Holliday junction (HJ) DNA during genetic recombination and DNA repair. Endonuclease that resolves HJ intermediates. Cleaves cruciform DNA by making single-stranded nicks across the HJ at symmetrical positions within the homologous arms, yielding a 5'-phosphate and a 3'-hydroxyl group; requires a central core of homology in the junction. The consensus cleavage sequence is 5'-(A/T)TT(C/G)-3'. Cleavage occurs on the 3'-side of the TT dinucleotide at the point of strand exchange. HJ branch migration catalyzed by RuvA-RuvB allows RuvC to scan DNA until it finds its consensus sequence, where it cleaves and resolves the cruciform DNA. The polypeptide is Crossover junction endodeoxyribonuclease RuvC (Actinobacillus succinogenes (strain ATCC 55618 / DSM 22257 / CCUG 43843 / 130Z)).